The chain runs to 128 residues: Protein SOB FIVE-LIKE 3 (128 aa).

Disordered regions lie at residues M1–E26 and K54–K128. Residues S8–S18 are compositionally biased toward polar residues. Positions S11–Y16 match the SOFL-A motif. The SOFL-B signature appears at S59–P68. Residues R80–N104 show a composition bias toward basic and acidic residues. Positions R111–S118 match the Nuclear localization signal motif.

Belongs to the SOFL plant protein family. In terms of tissue distribution, expressed in seedlings, roots, flowers and siliques.

The protein localises to the cytoplasm. Its subcellular location is the nucleus. Involved in cytokinin-mediated development. This Arabidopsis thaliana (Mouse-ear cress) protein is Protein SOB FIVE-LIKE 3.